The following is a 131-amino-acid chain: Profilin-1 (131 aa).

The protein belongs to the profilin family. Occurs in many kinds of cells as a complex with monomeric actin in a 1:1 ratio.

The protein localises to the cytoplasm. Its subcellular location is the cytoskeleton. Its function is as follows. Binds to actin and affects the structure of the cytoskeleton. At high concentrations, profilin prevents the polymerization of actin, whereas it enhances it at low concentrations. By binding to PIP2, it inhibits the formation of IP3 and DG. This chain is Profilin-1, found in Lilium longiflorum (Trumpet lily).